The following is a 259-amino-acid chain: MASPLRLRSALALVTGAGSGIGRAVSVRLAKEGATVAACDLDRAAACETVWLLGGQGSEKVAPGGAHTAFQADVSEAGAVRRLLEQVQACFSRPPSVVVSCAGLTRDEFLLRMSEDDWDRVIAVNLKGIFLVTQAAAQALVSSGCRGSIINISSIVGKVGNVGQTNYAASKAGVIGLTQTAARELGRHGIRCNSVLPGFITTPMTQKVPQKVLDKVIGMIPMGHLGDPEDVADAVTFLASEDSGYITGASVEVTGGLYM.

Residues 13–21 (LVTGAGSGI) and 40–41 (DL) contribute to the NAD(+) site. Ser58 is subject to Phosphoserine. 72 to 74 (ADV) provides a ligand contact to NAD(+). Ser154 is a substrate binding site. An N6-succinyllysine modification is found at Lys158. Catalysis depends on Tyr167, which acts as the Proton acceptor. NAD(+) is bound by residues 167-171 (YAASK) and 200-202 (ITT). Lys171 is modified (N6-succinyllysine).

Belongs to the short-chain dehydrogenases/reductases (SDR) family. As to quaternary structure, heterotetramer with CBR4; contains two molecules of HSD17B8 and CBR4.

Its subcellular location is the mitochondrion matrix. It carries out the reaction a (3R)-3-hydroxyacyl-CoA + NAD(+) = a 3-oxoacyl-CoA + NADH + H(+). The enzyme catalyses 17beta-estradiol + NAD(+) = estrone + NADH + H(+). It catalyses the reaction testosterone + NAD(+) = androst-4-ene-3,17-dione + NADH + H(+). The catalysed reaction is 17beta-hydroxy-5alpha-androstan-3-one + NAD(+) = 5alpha-androstan-3,17-dione + NADH + H(+). It functions in the pathway steroid biosynthesis; estrogen biosynthesis. It participates in lipid metabolism; fatty acid biosynthesis. The protein operates within lipid metabolism; mitochondrial fatty acid beta-oxidation. Required for the solubility and assembly of the heterotetramer 3-ketoacyl-[acyl carrier protein] (ACP) reductase functional complex (KAR or KAR1) that forms part of the mitochondrial fatty acid synthase (mtFAS). Alpha-subunit of the KAR complex that acts as scaffold protein required for the stability of carbonyl reductase type-4 (CBR4, beta-subunit of the KAR complex) and for its 3-ketoacyl-ACP reductase activity, thereby participating in mitochondrial fatty acid biosynthesis. Catalyzes the NAD-dependent conversion of (3R)-3-hydroxyacyl-CoA into 3-ketoacyl-CoA (3-oxoacyl-CoA) with no chain length preference; this enzymatic activity is not needed for the KAR function. Prefers (3R)-3-hydroxyacyl-CoA over (3S)-3-hydroxyacyl-CoA and displays enzymatic activity only in the presence of NAD(+). Cooperates with enoyl-CoA hydratase 1 in mitochondria, together they constitute an alternative route to the auxiliary enzyme pathways for the breakdown of Z-PUFA (cis polyunsaturated fatty acid) enoyl-esters. NAD-dependent 17-beta-hydroxysteroid dehydrogenase with highest activity towards estradiol (17beta-estradiol or E2). Has very low activity towards testosterone and dihydrotestosterone (17beta-hydroxy-5alpha-androstan-3-one). Primarily an oxidative enzyme, it can switch to a reductive mode determined in the appropriate physiologic milieu and catalyze the reduction of estrone (E1) to form biologically active 17beta-estradiol. The protein is (3R)-3-hydroxyacyl-CoA dehydrogenase (HSD17B8) of Canis lupus familiaris (Dog).